The sequence spans 273 residues: Dermonecrotic toxin LhSicTox-alphaIA1iv (273 aa).

Histidine 5 is a catalytic residue. Mg(2+) contacts are provided by glutamate 25 and aspartate 27. The active-site Nucleophile is the histidine 41. 2 disulfides stabilise this stretch: cysteine 45-cysteine 51 and cysteine 47-cysteine 190. Aspartate 85 serves as a coordination point for Mg(2+).

The protein belongs to the arthropod phospholipase D family. Class II subfamily. Requires Mg(2+) as cofactor. As to expression, expressed by the venom gland.

The protein resides in the secreted. It carries out the reaction an N-(acyl)-sphingosylphosphocholine = an N-(acyl)-sphingosyl-1,3-cyclic phosphate + choline. The catalysed reaction is an N-(acyl)-sphingosylphosphoethanolamine = an N-(acyl)-sphingosyl-1,3-cyclic phosphate + ethanolamine. The enzyme catalyses a 1-acyl-sn-glycero-3-phosphocholine = a 1-acyl-sn-glycero-2,3-cyclic phosphate + choline. It catalyses the reaction a 1-acyl-sn-glycero-3-phosphoethanolamine = a 1-acyl-sn-glycero-2,3-cyclic phosphate + ethanolamine. Functionally, dermonecrotic toxins cleave the phosphodiester linkage between the phosphate and headgroup of certain phospholipids (sphingolipid and lysolipid substrates), forming an alcohol (often choline) and a cyclic phosphate. This toxin acts on sphingomyelin (SM). It may also act on ceramide phosphoethanolamine (CPE), lysophosphatidylcholine (LPC) and lysophosphatidylethanolamine (LPE), but not on lysophosphatidylserine (LPS), and lysophosphatidylglycerol (LPG). It acts by transphosphatidylation, releasing exclusively cyclic phosphate products as second products. Induces dermonecrosis, hemolysis, increased vascular permeability, edema, inflammatory response, and platelet aggregation. This is Dermonecrotic toxin LhSicTox-alphaIA1iv from Loxosceles hirsuta (Recluse spider).